A 155-amino-acid chain; its full sequence is uncharacterized protein (155 aa).

Disordered stretches follow at residues 24–63 (RVGY…VVLK) and 80–155 (KAAK…DENE). S50 is modified (phosphoserine). Residue K108 is modified to N6-acetyllysine. Polar residues predominate over residues 128–147 (KQSSVRKNSQKQIKNSSLLS). S130, S147, and S150 each carry phosphoserine.

This is an uncharacterized protein from Mus musculus (Mouse).